The sequence spans 114 residues: DNA-binding protein rrnAC3180 (114 aa).

Residues 1 to 11 (MSGDPSEEELE) show a composition bias toward acidic residues. The segment at 1-45 (MSGDPSEEELEELRKKKMEQLKEQQGGEGEGQEAAQQQAEAQKQA) is disordered. Residues 12-22 (ELRKKKMEQLK) are compositionally biased toward basic and acidic residues. Positions 32–45 (QEAAQQQAEAQKQA) are enriched in low complexity.

It belongs to the PDCD5 family.

The protein is DNA-binding protein rrnAC3180 of Haloarcula marismortui (strain ATCC 43049 / DSM 3752 / JCM 8966 / VKM B-1809) (Halobacterium marismortui).